The chain runs to 476 residues: Replication factor C large subunit (476 aa).

43–50 (GKPGIGKT) is an ATP binding site. The interval 435–476 (LEALRMQEPPVPETPPAAEEQPLEEPQEEKKLAPKQATLDFF) is disordered.

Belongs to the activator 1 small subunits family. RfcL subfamily. Heteromultimer composed of small subunits (RfcS) and large subunits (RfcL).

Its function is as follows. Part of the RFC clamp loader complex which loads the PCNA sliding clamp onto DNA. In Methanocorpusculum labreanum (strain ATCC 43576 / DSM 4855 / Z), this protein is Replication factor C large subunit.